A 289-amino-acid polypeptide reads, in one-letter code: Protease HtpX homolog (289 aa).

Transmembrane regions (helical) follow at residues 8–28 and 29–49; these read LALLAALSGLLIAISYWVIGG and SSGLMIGIGLAAVTNLLSWYQ. Zn(2+) is bound at residue His-132. Glu-133 is an active-site residue. His-136 serves as a coordination point for Zn(2+). Transmembrane regions (helical) follow at residues 151–171 and 183–203; these read VAGAISFLAQMVSYSLWFGGI and LGVLLTVVLAPIAATIIQLAI. Glu-208 contacts Zn(2+).

Belongs to the peptidase M48B family. It depends on Zn(2+) as a cofactor.

It localises to the cell inner membrane. This chain is Protease HtpX homolog, found in Nostoc sp. (strain PCC 7120 / SAG 25.82 / UTEX 2576).